Reading from the N-terminus, the 164-residue chain is S-ribosylhomocysteine lyase (164 aa).

Residues His-54, His-58, and Cys-128 each contribute to the Fe cation site.

The protein belongs to the LuxS family. As to quaternary structure, homodimer. The cofactor is Fe cation.

It catalyses the reaction S-(5-deoxy-D-ribos-5-yl)-L-homocysteine = (S)-4,5-dihydroxypentane-2,3-dione + L-homocysteine. In terms of biological role, involved in the synthesis of autoinducer 2 (AI-2) which is secreted by bacteria and is used to communicate both the cell density and the metabolic potential of the environment. The regulation of gene expression in response to changes in cell density is called quorum sensing. Catalyzes the transformation of S-ribosylhomocysteine (RHC) to homocysteine (HC) and 4,5-dihydroxy-2,3-pentadione (DPD). This is S-ribosylhomocysteine lyase from Campylobacter jejuni subsp. jejuni serotype O:2 (strain ATCC 700819 / NCTC 11168).